Here is a 442-residue protein sequence, read N- to C-terminus: Mirror-image polydactyly gene 1 protein (442 aa).

The interval 1–39 is disordered; sequence MENWSKDITHSYLEQETTGINKSTQPDEQLTMNSEKSMH. Residues 12–35 are compositionally biased toward polar residues; the sequence is YLEQETTGINKSTQPDEQLTMNSE. Coiled coils occupy residues 107–212 and 253–435; these read SDKE…LENI and ECKM…KVGT.

Expressed very weakly in heart, liver, skeletal muscle, kidney, pancreas and fetal kidney. Not detected in brain, placenta and lung.

This is Mirror-image polydactyly gene 1 protein (MIPOL1) from Homo sapiens (Human).